The primary structure comprises 99 residues: Small ribosomal subunit protein bS20 (99 aa).

It belongs to the bacterial ribosomal protein bS20 family.

Its function is as follows. Binds directly to 16S ribosomal RNA. This chain is Small ribosomal subunit protein bS20, found in Caldicellulosiruptor bescii (strain ATCC BAA-1888 / DSM 6725 / KCTC 15123 / Z-1320) (Anaerocellum thermophilum).